Reading from the N-terminus, the 1235-residue chain is ATP-dependent helicase/nuclease subunit A (1235 aa).

In terms of domain architecture, UvrD-like helicase ATP-binding spans 12 to 482; the sequence is SLWTDDQWKA…IDLSQNFRSR (471 aa). Residue 33 to 40 participates in ATP binding; that stretch reads AAAGSGKT. Positions 509–800 constitute a UvrD-like helicase C-terminal domain; it reads AAELTLGASF…RMMTIHASKG (292 aa).

This sequence belongs to the helicase family. AddA subfamily. As to quaternary structure, heterodimer of AddA and AddB/RexB. The cofactor is Mg(2+).

It carries out the reaction Couples ATP hydrolysis with the unwinding of duplex DNA by translocating in the 3'-5' direction.. The catalysed reaction is ATP + H2O = ADP + phosphate + H(+). In terms of biological role, the heterodimer acts as both an ATP-dependent DNA helicase and an ATP-dependent, dual-direction single-stranded exonuclease. Recognizes the chi site generating a DNA molecule suitable for the initiation of homologous recombination. The AddA nuclease domain is required for chi fragment generation; this subunit has the helicase and 3' -&gt; 5' nuclease activities. The polypeptide is ATP-dependent helicase/nuclease subunit A (Listeria monocytogenes serotype 4b (strain F2365)).